The chain runs to 257 residues: uncharacterized protein (257 aa).

The next 6 helical transmembrane spans lie at 23–43 (VLTDPVSWGLIGSLVVLEGLL), 79–99 (FIFIGLGMLLIKFWWIKVLGA), 131–151 (TFGIFWATVISVELMDLAFSV), 158–178 (FAVSEKVWVLLIGGMLGILMM), 199–219 (AFVLIGIIALKMAGSAFHYEM), and 221–241 (HSVFFIIIIAAFAVTLIIHYI).

This sequence belongs to the TerC family.

Its subcellular location is the cell membrane. This is an uncharacterized protein from Bacillus subtilis (strain 168).